The sequence spans 1258 residues: Ice nucleation protein (1258 aa).

Positions 162 to 1217 (ATYGSTLSGT…LTAGENSVLI (1056 aa)) are octapeptide periodicity. 5 disordered regions span residues 260-287 (YGSTQTAGEDSSLTAGYGSTQTAQKGSD), 311-342 (TQTAGEESTQTAGYGSTQTAQKGSDLTAGYGS), 356-383 (YGSTQTAGEDSSLTAGYGSTQTAQKGSD), 407-438 (TQTAGEESTQTAGYGSTQTAQKGSDLTAGYGS), and 452-480 (YGSTQTAGEDSSLTAGYGSTQTAQKGSDL). Polar residues-rich tracts occupy residues 261 to 286 (GSTQTAGEDSSLTAGYGSTQTAQKGS), 311 to 334 (TQTAGEESTQTAGYGSTQTAQKGS), 357 to 382 (GSTQTAGEDSSLTAGYGSTQTAQKGS), 407 to 430 (TQTAGEESTQTAGYGSTQTAQKGS), and 453 to 480 (GSTQTAGEDSSLTAGYGSTQTAQKGSDL).

Belongs to the bacterial ice nucleation protein family.

The protein localises to the cell outer membrane. Ice nucleation proteins enable bacteria to nucleate crystallization in supercooled water. This is Ice nucleation protein (iceE) from Enterobacter agglomerans (Erwinia herbicola).